We begin with the raw amino-acid sequence, 421 residues long: UDP-N-acetylglucosamine 1-carboxyvinyltransferase (421 aa).

22–23 (KN) contacts phosphoenolpyruvate. R93 contacts UDP-N-acetyl-alpha-D-glucosamine. C117 acts as the Proton donor in catalysis. C117 is modified (2-(S-cysteinyl)pyruvic acid O-phosphothioketal). Residues 122-126 (RPVDL), D308, and I330 contribute to the UDP-N-acetyl-alpha-D-glucosamine site.

Belongs to the EPSP synthase family. MurA subfamily.

The protein resides in the cytoplasm. It catalyses the reaction phosphoenolpyruvate + UDP-N-acetyl-alpha-D-glucosamine = UDP-N-acetyl-3-O-(1-carboxyvinyl)-alpha-D-glucosamine + phosphate. It participates in cell wall biogenesis; peptidoglycan biosynthesis. In terms of biological role, cell wall formation. Adds enolpyruvyl to UDP-N-acetylglucosamine. This is UDP-N-acetylglucosamine 1-carboxyvinyltransferase from Pseudomonas putida (strain W619).